The primary structure comprises 506 residues: Chromosomal replication initiator protein DnaA (506 aa).

The tract at residues 1-77 (MECATTATTP…IWAEESGAKR (77 aa)) is domain I, interacts with DnaA modulators. Residues 77-162 (RRVDLAVRNA…AVAGDVASGS (86 aa)) form a domain II region. Basic and acidic residues-rich tracts occupy residues 103 to 112 (TERTDMHSGD) and 121 to 142 (SDGR…RAVE). A disordered region spans residues 103-142 (TERTDMHSGDTRQQSARISDGRSTDARGADGRGSDARAVE). Positions 163-384 (PLDARLTFET…GALNKLLAFN (222 aa)) are domain III, AAA+ region. ATP is bound by residues G210, G212, K213, and T214. The tract at residues 385-506 (QLTGEPVTLE…EVLKRLALEA (122 aa)) is domain IV, binds dsDNA.

It belongs to the DnaA family. As to quaternary structure, oligomerizes as a right-handed, spiral filament on DNA at oriC.

Its subcellular location is the cytoplasm. Functionally, plays an essential role in the initiation and regulation of chromosomal replication. ATP-DnaA binds to the origin of replication (oriC) to initiate formation of the DNA replication initiation complex once per cell cycle. Binds the DnaA box (a 9 base pair repeat at the origin) and separates the double-stranded (ds)DNA. Forms a right-handed helical filament on oriC DNA; dsDNA binds to the exterior of the filament while single-stranded (ss)DNA is stabiized in the filament's interior. The ATP-DnaA-oriC complex binds and stabilizes one strand of the AT-rich DNA unwinding element (DUE), permitting loading of DNA polymerase. After initiation quickly degrades to an ADP-DnaA complex that is not apt for DNA replication. Binds acidic phospholipids. The polypeptide is Chromosomal replication initiator protein DnaA (Xanthobacter autotrophicus (strain ATCC BAA-1158 / Py2)).